A 211-amino-acid chain; its full sequence is Guanylate kinase (211 aa).

Positions 5–184 (GLLIVFSGPS…AAERVKRIIE (180 aa)) constitute a Guanylate kinase-like domain. 12–19 (GPSGVGKG) serves as a coordination point for ATP.

It belongs to the guanylate kinase family.

The protein localises to the cytoplasm. It catalyses the reaction GMP + ATP = GDP + ADP. In terms of biological role, essential for recycling GMP and indirectly, cGMP. The sequence is that of Guanylate kinase from Streptococcus pyogenes serotype M1.